The following is a 374-amino-acid chain: Actin-related protein 2/3 complex subunit 2B (374 aa).

It belongs to the ARPC2 family. In terms of assembly, component of the Arp2/3 complex composed of ARP2, ARP3, ARPC1/p41-ARC, ARPC2/p34-ARC, ARPC3/p21-ARC, ARPC4/p20-ARC and ARPC5/p16-ARC. Expressed at low levels in all tissues with a relatively highest expression in inflorescences.

The protein resides in the cytoplasm. Its subcellular location is the cytoskeleton. The protein localises to the cell projection. Functions as actin-binding component of the Arp2/3 complex which is involved in regulation of actin polymerization and together with an activating nucleation-promoting factor (NPF) mediates the formation of branched actin networks. Seems to contact the mother actin filament. Arp2/3 complex plays a critical role in the control of cell morphogenesis via the modulation of cell polarity development. The polypeptide is Actin-related protein 2/3 complex subunit 2B (ARPC2B) (Arabidopsis thaliana (Mouse-ear cress)).